A 64-amino-acid polypeptide reads, in one-letter code: Protein DsrB (64 aa).

This sequence belongs to the DsrB family.

This Salmonella arizonae (strain ATCC BAA-731 / CDC346-86 / RSK2980) protein is Protein DsrB.